A 155-amino-acid chain; its full sequence is Large ribosomal subunit protein eL24 (155 aa).

The disordered stretch occupies residues 92–155; that stretch reads AKRNMKPEVR…KSAPRVGGKR (64 aa). Basic and acidic residues predominate over residues 96 to 117; sequence MKPEVRKAQRDQAIKAAKEQKK. The span at 124–133 shows a compositional bias: low complexity; that stretch reads KASAPAPKAK.

It belongs to the eukaryotic ribosomal protein eL24 family.

The polypeptide is Large ribosomal subunit protein eL24 (RpL24) (Spodoptera frugiperda (Fall armyworm)).